The primary structure comprises 690 residues: Lipase 2 (690 aa).

A signal peptide spans 1-37; sequence MLRGQEERKYSIRKYSIGVVSVLAATMFVVSSHEAQA. A compositionally biased stretch (polar residues) spans 52-71; the sequence is LNQPGEQGNAITSHQMQSGK. A disordered region spans residues 52–266; the sequence is LNQPGEQGNA…KPTDKNTDNK (215 aa). The segment covering 72–81 has biased composition (basic and acidic residues); sequence QLDDMHKENG. 3 stretches are compositionally biased toward polar residues: residues 82–114, 124–171, and 185–206; these read KSGT…NDNQ, SKQS…QPSI, and PTST…AQDA. Basic and acidic residues-rich tracts occupy residues 225–237 and 257–266; these read IDAK…RQSE and KPTDKNTDNK. Active-site charge relay system residues include S412 and H645.

The protein belongs to the AB hydrolase superfamily. Lipase family.

It localises to the secreted. The catalysed reaction is a triacylglycerol + H2O = a diacylglycerol + a fatty acid + H(+). This is Lipase 2 (lip2) from Staphylococcus aureus (strain NCTC 8325 / PS 47).